The chain runs to 153 residues: Ribosome maturation factor RimP (153 aa).

This sequence belongs to the RimP family.

The protein resides in the cytoplasm. In terms of biological role, required for maturation of 30S ribosomal subunits. In Christiangramia forsetii (strain DSM 17595 / CGMCC 1.15422 / KT0803) (Gramella forsetii), this protein is Ribosome maturation factor RimP.